A 76-amino-acid polypeptide reads, in one-letter code: Tautomerase PptA (76 aa).

Proline 2 functions as the Proton acceptor; via imino nitrogen in the catalytic mechanism.

Belongs to the 4-oxalocrotonate tautomerase family. PptA subfamily. In terms of assembly, homodimer.

Its subcellular location is the cytoplasm. This Pectobacterium atrosepticum (strain SCRI 1043 / ATCC BAA-672) (Erwinia carotovora subsp. atroseptica) protein is Tautomerase PptA.